The sequence spans 74 residues: Cecropin-P3 (74 aa).

The N-terminal stretch at 1-13 is a signal peptide; the sequence is MFLIYLLVQTAES. The propeptide at 45 to 74 is removed in mature form; the sequence is RRRSVGEEDAIPSHIEVNKFFLRKPAKEHI.

This sequence belongs to the cecropin family. Expressed in the body wall, intestine, uterus and ovary.

The protein localises to the secreted. In terms of biological role, has antibacterial activity against several Gram-positive and Gram-negative bacteria. Is weakly active against yeasts. Acts by a nonpore mechanism. The protein is Cecropin-P3 (ASCEC-3) of Ascaris suum (Pig roundworm).